Here is a 341-residue protein sequence, read N- to C-terminus: Phenylalanine--tRNA ligase alpha subunit (341 aa).

E256 contacts Mg(2+).

It belongs to the class-II aminoacyl-tRNA synthetase family. Phe-tRNA synthetase alpha subunit type 1 subfamily. As to quaternary structure, tetramer of two alpha and two beta subunits. The cofactor is Mg(2+).

The protein resides in the cytoplasm. The enzyme catalyses tRNA(Phe) + L-phenylalanine + ATP = L-phenylalanyl-tRNA(Phe) + AMP + diphosphate + H(+). This Leptospira biflexa serovar Patoc (strain Patoc 1 / Ames) protein is Phenylalanine--tRNA ligase alpha subunit.